Reading from the N-terminus, the 174-residue chain is Chorismate pyruvate-lyase (174 aa).

Residues Met-36, Arg-78, Leu-116, and Glu-157 each coordinate substrate.

It belongs to the UbiC family. Monomer.

It is found in the cytoplasm. It carries out the reaction chorismate = 4-hydroxybenzoate + pyruvate. It participates in cofactor biosynthesis; ubiquinone biosynthesis. Functionally, removes the pyruvyl group from chorismate, with concomitant aromatization of the ring, to provide 4-hydroxybenzoate (4HB) for the ubiquinone pathway. This chain is Chorismate pyruvate-lyase, found in Serratia proteamaculans (strain 568).